The following is a 135-amino-acid chain: MIITYKLLRNYLLDQDKYHITVKNNYLVISVPDIDYHVTVFQDQWDDYFKFTKKPYHLFHISSNSEINKCSSYFWVGLYENRIQNIPRKYFKYNQDEYNFYSSTRSPCVLKELTLLLKHFQYILNKIKKMCSNNH.

This is an uncharacterized protein from Acanthamoeba polyphaga (Amoeba).